The sequence spans 1234 residues: ATP-dependent helicase/nuclease subunit A (1234 aa).

The UvrD-like helicase ATP-binding domain maps to Thr2–Thr475. Ala23–Thr30 is a binding site for ATP. Residues Tyr507–Gly806 form the UvrD-like helicase C-terminal domain.

The protein belongs to the helicase family. AddA subfamily. As to quaternary structure, heterodimer of AddA and AddB/RexB. It depends on Mg(2+) as a cofactor.

It carries out the reaction Couples ATP hydrolysis with the unwinding of duplex DNA by translocating in the 3'-5' direction.. The catalysed reaction is ATP + H2O = ADP + phosphate + H(+). Functionally, the heterodimer acts as both an ATP-dependent DNA helicase and an ATP-dependent, dual-direction single-stranded exonuclease. Recognizes the chi site generating a DNA molecule suitable for the initiation of homologous recombination. The AddA nuclease domain is required for chi fragment generation; this subunit has the helicase and 3' -&gt; 5' nuclease activities. This Lacticaseibacillus casei (strain BL23) (Lactobacillus casei) protein is ATP-dependent helicase/nuclease subunit A.